The following is a 235-amino-acid chain: Exotoxin type C (235 aa).

The signal sequence occupies residues 1 to 27; that stretch reads MKKINIIKIVFIITVILISTISPIIKS. Positions 194, 228, and 230 each coordinate Zn(2+).

It belongs to the staphylococcal/streptococcal toxin family.

Superantigen that acts as a causative agent of the symptoms associated with scarlet fever. Has been associated with streptococcal toxic shock-like disease and may play a role in the early events of rheumatic fever. Superantigens cross-link major histocompatibility complex (MHC) class II and T-cell receptor (TCR) molecules, resulting in an overstimulation of T-cells associated with a massive release of pyrogenic and inflammatory cytokines. This Streptococcus pyogenes serotype M18 (strain MGAS8232) protein is Exotoxin type C.